The chain runs to 358 residues: Protein RecA (358 aa).

An ATP-binding site is contributed by 67–74 (GPESSGKT).

This sequence belongs to the RecA family.

Its subcellular location is the cytoplasm. Its function is as follows. Can catalyze the hydrolysis of ATP in the presence of single-stranded DNA, the ATP-dependent uptake of single-stranded DNA by duplex DNA, and the ATP-dependent hybridization of homologous single-stranded DNAs. It interacts with LexA causing its activation and leading to its autocatalytic cleavage. The sequence is that of Protein RecA from Xenorhabdus nematophila (strain ATCC 19061 / DSM 3370 / CCUG 14189 / LMG 1036 / NCIMB 9965 / AN6).